We begin with the raw amino-acid sequence, 240 residues long: MSCNGCRVLRKGCSETCILRPCLQWIESAESQGHATVFVAKFFGRAGLMSFISSVPELQRPALFQSLLFEACGRTVNPVNGAVGMLWTRNWHVCQAAVETVLRGGTLRPISDLLESPSLMISCDESSEIWHQDVSRNQTHHCRFSTSRSTTEMKDSLVNRKRLKSDSDLDLQVNHGLTLTAPAVPVPFLPPSSFCKVVKGDRPGSPSEESVTTSCWENGMRGDNKQKRNKGEKKLLNLFV.

In terms of domain architecture, LOB spans 1–107 (MSCNGCRVLR…VETVLRGGTL (107 aa)). The segment at 200 to 233 (GDRPGSPSEESVTTSCWENGMRGDNKQKRNKGEK) is disordered. The segment covering 207–216 (SEESVTTSCW) has biased composition (polar residues).

The protein belongs to the LOB domain-containing protein family. Expressed in young shoots, roots, stems, leaves and flowers.

In Arabidopsis thaliana (Mouse-ear cress), this protein is LOB domain-containing protein 39 (LBD39).